The sequence spans 238 residues: tRNA (guanine-N(7)-)-methyltransferase (238 aa).

S-adenosyl-L-methionine-binding residues include Glu68, Glu93, Asp120, and Asp143. Asp143 is a catalytic residue. Substrate contacts are provided by residues Lys147, Asp179, and 216-219 (TKFE).

It belongs to the class I-like SAM-binding methyltransferase superfamily. TrmB family.

The catalysed reaction is guanosine(46) in tRNA + S-adenosyl-L-methionine = N(7)-methylguanosine(46) in tRNA + S-adenosyl-L-homocysteine. It participates in tRNA modification; N(7)-methylguanine-tRNA biosynthesis. In terms of biological role, catalyzes the formation of N(7)-methylguanine at position 46 (m7G46) in tRNA. The sequence is that of tRNA (guanine-N(7)-)-methyltransferase from Shewanella frigidimarina (strain NCIMB 400).